A 505-amino-acid chain; its full sequence is Ribose import ATP-binding protein RbsA 2 (505 aa).

ABC transporter domains are found at residues 13-249 and 259-503; these read LALE…VGRD and VRAG…TGRA. 45–52 provides a ligand contact to ATP; sequence GENGAGKS.

This sequence belongs to the ABC transporter superfamily. Ribose importer (TC 3.A.1.2.1) family. The complex is composed of an ATP-binding protein (RbsA), two transmembrane proteins (RbsC) and a solute-binding protein (RbsB).

It localises to the cell membrane. The catalysed reaction is D-ribose(out) + ATP + H2O = D-ribose(in) + ADP + phosphate + H(+). Its function is as follows. Part of the ABC transporter complex RbsABC involved in ribose import. Responsible for energy coupling to the transport system. The chain is Ribose import ATP-binding protein RbsA 2 from Streptomyces avermitilis (strain ATCC 31267 / DSM 46492 / JCM 5070 / NBRC 14893 / NCIMB 12804 / NRRL 8165 / MA-4680).